The sequence spans 456 residues: MDSIKGTDEKYLTVSELNWYVKQKFDRDPYLRQIFLQGELSNFRFRRGGHQYFSLKDDKSKINVVMFRGDFDKVKFEPEEGMKVYVTGRLSTYEAQGSYQFYAKSMEPSGLGALYERFRQLQEKLAKEGLFAQEHKRPLPLFPDKIAVVTSASGAVIHDIMVTANRRFPHAEIDLFPAQVQGESAAGSLVSAMQQIQARADEYDVLIIGRGGGSLEDLWPFNEEEVVRQVYAMKMPVISSVGHETDTTLCDLAADCRAATPTAAAEMATPALPLVLAEIGQLQTRLLTDIRAVIQVRAQALAQLENSFIMKEPQRLYEQKMQQVDQLSQQLSRMMEVIVKDQGQKLSLLTQRLQHQAPDRRIKQLKQENSYLAKSLEMGIKRILEQKQAACRQAVQQLDDYSPLKTLARGYSYTTDASGNVVKSVQQLVPGDQVRLHLKDGQAIGRIEEIKEEKND.

This sequence belongs to the XseA family. Heterooligomer composed of large and small subunits.

The protein resides in the cytoplasm. It catalyses the reaction Exonucleolytic cleavage in either 5'- to 3'- or 3'- to 5'-direction to yield nucleoside 5'-phosphates.. Its function is as follows. Bidirectionally degrades single-stranded DNA into large acid-insoluble oligonucleotides, which are then degraded further into small acid-soluble oligonucleotides. The polypeptide is Exodeoxyribonuclease 7 large subunit (Lactobacillus delbrueckii subsp. bulgaricus (strain ATCC BAA-365 / Lb-18)).